The primary structure comprises 270 residues: uncharacterized protein (270 aa).

Ala30 to Asn55 is a binding site for NADP(+). A substrate-binding site is contributed by Ser157. Tyr171 serves as the catalytic Proton acceptor.

Belongs to the short-chain dehydrogenases/reductases (SDR) family.

This is an uncharacterized protein from Mycobacterium tuberculosis (strain CDC 1551 / Oshkosh).